We begin with the raw amino-acid sequence, 883 residues long: Puromycin-sensitive aminopeptidase (883 aa).

Residues Glu125 and 265 to 269 (GAMEN) each bind substrate. Zn(2+) is bound at residue His301. The active-site Proton acceptor is the Glu302. Zn(2+)-binding residues include His305 and Glu324.

The protein belongs to the peptidase M1 family. It depends on Zn(2+) as a cofactor.

The catalysed reaction is Release of an N-terminal amino acid, preferentially alanine, from a wide range of peptides, amides and arylamides.. With respect to regulation, strongly inhibited by puromycin and DAMPAQ-22. Aminopeptidase with broad substrate specificity for several peptides. Involved in proteolytic events essential for cell growth and viability. Plays an essential role during prophase I of meiosis. Required for correct meiotic reconbination in both male and female gametophytes. The sequence is that of Puromycin-sensitive aminopeptidase (MPA1) from Arabidopsis thaliana (Mouse-ear cress).